The primary structure comprises 187 residues: Probable RNA 2'-phosphotransferase (187 aa).

This sequence belongs to the KptA/TPT1 family.

In terms of biological role, removes the 2'-phosphate from RNA via an intermediate in which the phosphate is ADP-ribosylated by NAD followed by a presumed transesterification to release the RNA and generate ADP-ribose 1''-2''-cyclic phosphate (APPR&gt;P). May function as an ADP-ribosylase. In Pseudomonas syringae pv. tomato (strain ATCC BAA-871 / DC3000), this protein is Probable RNA 2'-phosphotransferase.